We begin with the raw amino-acid sequence, 513 residues long: ATP synthase subunit alpha (513 aa).

An ATP-binding site is contributed by 169–176 (GDRQTGKT).

It belongs to the ATPase alpha/beta chains family. F-type ATPases have 2 components, CF(1) - the catalytic core - and CF(0) - the membrane proton channel. CF(1) has five subunits: alpha(3), beta(3), gamma(1), delta(1), epsilon(1). CF(0) has three main subunits: a(1), b(2) and c(9-12). The alpha and beta chains form an alternating ring which encloses part of the gamma chain. CF(1) is attached to CF(0) by a central stalk formed by the gamma and epsilon chains, while a peripheral stalk is formed by the delta and b chains.

It is found in the cell inner membrane. It catalyses the reaction ATP + H2O + 4 H(+)(in) = ADP + phosphate + 5 H(+)(out). In terms of biological role, produces ATP from ADP in the presence of a proton gradient across the membrane. The alpha chain is a regulatory subunit. The chain is ATP synthase subunit alpha from Ruthia magnifica subsp. Calyptogena magnifica.